Consider the following 290-residue polypeptide: Inorganic pyrophosphatase (290 aa).

R81 contributes to the diphosphate binding site. Positions 118, 123, and 155 each coordinate Mg(2+).

Belongs to the PPase family. Mg(2+) is required as a cofactor.

It is found in the cytoplasm. It carries out the reaction diphosphate + H2O = 2 phosphate + H(+). This is Inorganic pyrophosphatase (ipp-1) from Neurospora crassa (strain ATCC 24698 / 74-OR23-1A / CBS 708.71 / DSM 1257 / FGSC 987).